Consider the following 366-residue polypeptide: Probable cyclin-dependent kinase 10 (366 aa).

Residues 7-293 enclose the Protein kinase domain; that stretch reads FEKLDSIGEG…ASDAIKHPFF (287 aa). ATP is bound by residues 13–21 and lysine 36; that span reads IGEGTYGIV. Residue aspartate 132 is the Proton acceptor of the active site. The span at 315–358 shows a compositional bias: low complexity; it reads FKNQNKKQNNNFNNFVQNNQTNQNNQTNQNNQTNQNNKTSQNNN. The segment at 315-366 is disordered; the sequence is FKNQNKKQNNNFNNFVQNNQTNQNNQTNQNNQTNQNNKTSQNNNMDSYKYSK.

The protein belongs to the protein kinase superfamily. CMGC Ser/Thr protein kinase family. CDC2/CDKX subfamily.

The enzyme catalyses L-seryl-[protein] + ATP = O-phospho-L-seryl-[protein] + ADP + H(+). The catalysed reaction is L-threonyl-[protein] + ATP = O-phospho-L-threonyl-[protein] + ADP + H(+). The protein is Probable cyclin-dependent kinase 10 (cdk10) of Dictyostelium discoideum (Social amoeba).